A 266-amino-acid chain; its full sequence is Proteasome subunit alpha type-1 (266 aa).

It belongs to the peptidase T1A family. As to quaternary structure, the 26S proteasome consists of a 20S proteasome core and two 19S regulatory subunits. The 20S proteasome core is composed of 28 subunits that are arranged in four stacked rings, resulting in a barrel-shaped structure. The two end rings are each formed by seven alpha subunits, and the two central rings are each formed by seven beta subunits. The catalytic chamber with the active sites is on the inside of the barrel.

It localises to the cytoplasm. The protein resides in the nucleus. Functionally, the proteasome is a multicatalytic proteinase complex which is characterized by its ability to cleave peptides with Arg, Phe, Tyr, Leu, and Glu adjacent to the leaving group at neutral or slightly basic pH. The proteasome has an ATP-dependent proteolytic activity. The sequence is that of Proteasome subunit alpha type-1 from Trypanosoma brucei brucei.